A 197-amino-acid chain; its full sequence is Na(+)-translocating NADH-quinone reductase subunit E (197 aa).

The next 6 membrane-spanning stretches (helical) occupy residues 11–31 (SVFIENMALSFFLGMCTFLAV), 35–55 (VSTAFGLGVAVIFVLGLSVPA), 76–96 (FLKFITFIGVIAALVQILEMF), 108–128 (LGIYLPLITVNCAIFGAVSFM), 139–159 (VVYGFGAGLGWMLAIVALAGI), and 175–195 (LGITFIAAGLMAMAFMSFSGI).

The protein belongs to the NqrDE/RnfAE family. In terms of assembly, composed of six subunits; NqrA, NqrB, NqrC, NqrD, NqrE and NqrF.

The protein resides in the cell inner membrane. The catalysed reaction is a ubiquinone + n Na(+)(in) + NADH + H(+) = a ubiquinol + n Na(+)(out) + NAD(+). NQR complex catalyzes the reduction of ubiquinone-1 to ubiquinol by two successive reactions, coupled with the transport of Na(+) ions from the cytoplasm to the periplasm. NqrA to NqrE are probably involved in the second step, the conversion of ubisemiquinone to ubiquinol. The sequence is that of Na(+)-translocating NADH-quinone reductase subunit E from Neisseria meningitidis serogroup A / serotype 4A (strain DSM 15465 / Z2491).